The sequence spans 2194 residues: Glutamate synthase [NADH], amyloplastic (2194 aa).

The transit peptide at 1–101 (MSNSLSLTFT…LYDPAFDKDS (101 aa)) directs the protein to the amyloplast. C102 serves as the catalytic Nucleophile. The 402-residue stretch at 102–503 (CGVGFVAELN…PGMMLLVDFE (402 aa)) folds into the Glutamine amidotransferase type-2 domain. The interval 1021-1045 (GGKSNTGEGGEQPSRMEPLADGSRN) is disordered. Position 1193–1250 (1193–1250 (LAETHQTLVANDLRGRTTLQTDGQLKTGRDVAIAALLGAEEYGFSTAPLITLGCIMMR)) interacts with FMN. [3Fe-4S] cluster-binding residues include C1246, C1252, and C1257. An NAD(+)-binding site is contributed by 1974–1988 (GGGDTGTDCIGTSIR).

This sequence belongs to the glutamate synthase family. In terms of assembly, monomer. [3Fe-4S] cluster is required as a cofactor. It depends on FAD as a cofactor. Requires FMN as cofactor. In terms of tissue distribution, expressed in infected cells in root nodules. Barely detected in roots and stems.

The protein localises to the plastid. The protein resides in the amyloplast. It carries out the reaction 2 L-glutamate + NAD(+) = L-glutamine + 2-oxoglutarate + NADH + H(+). The protein operates within amino-acid biosynthesis; L-glutamate biosynthesis via GLT pathway; L-glutamate from 2-oxoglutarate and L-glutamine (NAD(+) route): step 1/1. Its pathway is energy metabolism; nitrogen metabolism. With respect to regulation, inhibited by malate, citrate, glutamate, NAD(+) and azaserine, but not by 2-2' dipyridil and N-ethylmaleimide. In terms of biological role, required for the assimilation of symbiotically fixed nitrogen into amino acids in root nodules. This Medicago sativa (Alfalfa) protein is Glutamate synthase [NADH], amyloplastic.